The primary structure comprises 421 residues: 3-isopropylmalate dehydratase large subunit (421 aa).

Cysteine 300, cysteine 360, and cysteine 363 together coordinate [4Fe-4S] cluster.

Belongs to the aconitase/IPM isomerase family. LeuC type 2 subfamily. As to quaternary structure, heterodimer of LeuC and LeuD. The cofactor is [4Fe-4S] cluster.

The enzyme catalyses (2R,3S)-3-isopropylmalate = (2S)-2-isopropylmalate. The protein operates within amino-acid biosynthesis; L-leucine biosynthesis; L-leucine from 3-methyl-2-oxobutanoate: step 2/4. Its function is as follows. Catalyzes the isomerization between 2-isopropylmalate and 3-isopropylmalate, via the formation of 2-isopropylmaleate. The chain is 3-isopropylmalate dehydratase large subunit from Moorella thermoacetica (strain ATCC 39073 / JCM 9320).